The sequence spans 194 residues: Crossover junction endodeoxyribonuclease RuvC (194 aa).

Residues Asp-8, Glu-72, and Asp-144 contribute to the active site. Mg(2+) is bound by residues Asp-8, Glu-72, and Asp-144.

It belongs to the RuvC family. In terms of assembly, homodimer which binds Holliday junction (HJ) DNA. The HJ becomes 2-fold symmetrical on binding to RuvC with unstacked arms; it has a different conformation from HJ DNA in complex with RuvA. In the full resolvosome a probable DNA-RuvA(4)-RuvB(12)-RuvC(2) complex forms which resolves the HJ. The cofactor is Mg(2+).

It is found in the cytoplasm. The catalysed reaction is Endonucleolytic cleavage at a junction such as a reciprocal single-stranded crossover between two homologous DNA duplexes (Holliday junction).. The RuvA-RuvB-RuvC complex processes Holliday junction (HJ) DNA during genetic recombination and DNA repair. Endonuclease that resolves HJ intermediates. Cleaves cruciform DNA by making single-stranded nicks across the HJ at symmetrical positions within the homologous arms, yielding a 5'-phosphate and a 3'-hydroxyl group; requires a central core of homology in the junction. The consensus cleavage sequence is 5'-(A/T)TT(C/G)-3'. Cleavage occurs on the 3'-side of the TT dinucleotide at the point of strand exchange. HJ branch migration catalyzed by RuvA-RuvB allows RuvC to scan DNA until it finds its consensus sequence, where it cleaves and resolves the cruciform DNA. The polypeptide is Crossover junction endodeoxyribonuclease RuvC (Psychrobacter cryohalolentis (strain ATCC BAA-1226 / DSM 17306 / VKM B-2378 / K5)).